The chain runs to 349 residues: ATPase GET3 (349 aa).

Residue 26–33 (KGGVGKTT) coordinates ATP. Asp-57 is a catalytic residue. The ATP site is built by Glu-240 and Asn-267. Zn(2+)-binding residues include Cys-280 and Cys-283.

This sequence belongs to the arsA ATPase family. Homodimer. Component of the Golgi to ER traffic (GET) complex, which is composed of GET1, GET2 and GET3. Within the complex, GET1 and GET2 form a heterotetramer which is stabilized by phosphatidylinositol binding and which binds to the GET3 homodimer. Interacts with the chloride channel protein GEF1.

It is found in the cytoplasm. The protein resides in the endoplasmic reticulum. The protein localises to the golgi apparatus. ATPase required for the post-translational delivery of tail-anchored (TA) proteins to the endoplasmic reticulum. Recognizes and selectively binds the transmembrane domain of TA proteins in the cytosol. This complex then targets to the endoplasmic reticulum by membrane-bound receptors GET1 and GET2, where the tail-anchored protein is released for insertion. This process is regulated by ATP binding and hydrolysis. ATP binding drives the homodimer towards the closed dimer state, facilitating recognition of newly synthesized TA membrane proteins. ATP hydrolysis is required for insertion. Subsequently, the homodimer reverts towards the open dimer state, lowering its affinity for the GET1-GET2 receptor, and returning it to the cytosol to initiate a new round of targeting. Cooperates with the HDEL receptor ERD2 to mediate the ATP-dependent retrieval of resident ER proteins that contain a C-terminal H-D-E-L retention signal from the Golgi to the ER. Involved in low-level resistance to the oxyanions arsenite and arsenate, and in heat tolerance. In Kluyveromyces lactis (strain ATCC 8585 / CBS 2359 / DSM 70799 / NBRC 1267 / NRRL Y-1140 / WM37) (Yeast), this protein is ATPase GET3.